The sequence spans 282 residues: sn-glycerol-3-phosphate transport system permease protein UgpE (282 aa).

Transmembrane regions (helical) follow at residues 14–34, 86–106, 112–132, 146–168, 201–221, and 248–268; these read LILILGIIIVAFPIYYTFVAS, MAIAVGKIIISFMSAFAIVFF, MFFFWMIFITLMLPVEVRILP, YAGLTLPLMASATATFLFRQFFL, IAALFVILFIYGWTQYLWPLL, and WNYVMVTAILAIIPPILVVVL. The 192-residue stretch at 78 to 269 folds into the ABC transmembrane type-1 domain; that stretch reads LWNSFVVAMA…IPPILVVVLM (192 aa).

It belongs to the binding-protein-dependent transport system permease family. As to quaternary structure, the complex is composed of two ATP-binding proteins (UgpC), two transmembrane proteins (UgpA and UgpE) and a solute-binding protein (UgpB).

The protein localises to the cell inner membrane. In terms of biological role, part of the ABC transporter complex UgpBAEC involved in sn-glycerol-3-phosphate (G3P) import. Probably responsible for the translocation of the substrate across the membrane. The polypeptide is sn-glycerol-3-phosphate transport system permease protein UgpE (ugpE) (Brucella melitensis biotype 1 (strain ATCC 23456 / CCUG 17765 / NCTC 10094 / 16M)).